A 375-amino-acid polypeptide reads, in one-letter code: Growth/differentiation factor 8 (375 aa).

An N-terminal signal peptide occupies residues 1 to 23 (MQKLQIYVYIYLFMLIVAGPVDL). The propeptide occupies 24-266 (NENSEQKENV…VTDTPKRSRR (243 aa)). N-linked (GlcNAc...) asparagine glycosylation occurs at Asn71. 4 cysteine pairs are disulfide-bonded: Cys272/Cys282, Cys281/Cys340, Cys309/Cys372, and Cys313/Cys374.

The protein belongs to the TGF-beta family. As to quaternary structure, homodimer; disulfide-linked. Interacts with WFIKKN2, leading to inhibit its activity. Interacts with FSTL3. In terms of processing, synthesized as large precursor molecule that undergoes proteolytic cleavage to generate an N-terminal propeptide and a disulfide linked C-terminal dimer, which is the biologically active molecule. The circulating form consists of a latent complex of the C-terminal dimer and other proteins, including its propeptide, which maintain the C-terminal dimer in a latent, inactive state. Ligand activation requires additional cleavage of the prodomain by a tolloid-like metalloproteinase.

It is found in the secreted. In terms of biological role, acts specifically as a negative regulator of skeletal muscle growth. The polypeptide is Growth/differentiation factor 8 (MSTN) (Sus scrofa (Pig)).